Reading from the N-terminus, the 519-residue chain is Sensory neuron membrane protein 2 (519 aa).

Topologically, residues 1–7 (MLAKHSK) are cytoplasmic. The helical transmembrane segment at 8 to 28 (LFFTGSVVFLIVAIVLASWGF) threads the bilayer. The Extracellular segment spans residues 29-469 (PKIISTRIQK…DAHALLSYAQ (441 aa)). N-linked (GlcNAc...) asparagine glycans are attached at residues Asn-44, Asn-67, Asn-104, Asn-166, Asn-229, Asn-272, and Asn-314. Cystine bridges form between Cys-268-Cys-338, Cys-299-Cys-362, and Cys-340-Cys-351. The helical transmembrane segment at 470 to 490 (LARWIILAAAIILAIIATITV) threads the bilayer. Residues 491–519 (ARSTSLISWPRNSNSVNFIIGPMVNDKMR) are Cytoplasmic-facing.

Belongs to the CD36 family. As to expression, localizes to both male and female antennae but not the leg, wing, gut, head or thoracic ganglia. Detected throughout the sensory epithelium, associating with both sex-pheromone sensilla and plant-volatile sensilla. Differentially expressed among different sensilla and different neurons within a given sensillum.

The protein resides in the cell membrane. Functionally, plays an olfactory role that is not restricted to pheromone sensitivity. This chain is Sensory neuron membrane protein 2, found in Manduca sexta (Tobacco hawkmoth).